Here is a 290-residue protein sequence, read N- to C-terminus: Nucleoid occlusion protein (290 aa).

A DNA-binding region (H-T-H motif) is located at residues 153–172 (EALAQRLGKGQSTIANKLRL).

It belongs to the ParB family.

It is found in the cytoplasm. The protein resides in the nucleoid. Its function is as follows. Effects nucleoid occlusion by binding relatively nonspecifically to DNA and preventing the assembly of the division machinery in the vicinity of the nucleoid, especially under conditions that disturb the cell cycle. It helps to coordinate cell division and chromosome segregation by preventing the formation of the Z ring through the nucleoid, which would cause chromosome breakage. This is Nucleoid occlusion protein from Bacillus cytotoxicus (strain DSM 22905 / CIP 110041 / 391-98 / NVH 391-98).